We begin with the raw amino-acid sequence, 70 residues long: Small, acid-soluble spore protein 1 (70 aa).

This sequence belongs to the alpha/beta-type SASP family.

Its function is as follows. SASP are bound to spore DNA. They are double-stranded DNA-binding proteins that cause DNA to change to an a-like conformation. They protect the DNA backbone from chemical and enzymatic cleavage and are thus involved in dormant spore's high resistance to UV light. The sequence is that of Small, acid-soluble spore protein 1 (sasP-1) from Bacillus cereus.